We begin with the raw amino-acid sequence, 527 residues long: Probable protein kinase UbiB (527 aa).

Residues 23-43 form a helical membrane-spanning segment; the sequence is ELLLELPLPFWLRALSWLLPW. Residues 125 to 488 form the Protein kinase domain; that stretch reads RFDSQPLASA…ESDARDQWPL (364 aa). Residues 131 to 139 and lysine 153 each bind ATP; that span reads LASASVAQV. Aspartate 288 serves as the catalytic Proton acceptor. Residues 504 to 524 traverse the membrane as a helical segment; it reads LAPLLATWPAWLMVGGGLYLV.

This sequence belongs to the ABC1 family. UbiB subfamily.

It localises to the cell inner membrane. It functions in the pathway cofactor biosynthesis; ubiquinone biosynthesis [regulation]. Is probably a protein kinase regulator of UbiI activity which is involved in aerobic coenzyme Q (ubiquinone) biosynthesis. In Ectopseudomonas mendocina (strain ymp) (Pseudomonas mendocina), this protein is Probable protein kinase UbiB.